The sequence spans 195 residues: dITP/XTP pyrophosphatase (195 aa).

9–14 (TGNKGK) provides a ligand contact to substrate. Positions 41 and 70 each coordinate Mg(2+). D70 serves as the catalytic Proton acceptor. Substrate-binding positions include S71, 155–158 (FGYD), K178, and 183–184 (HR).

The protein belongs to the HAM1 NTPase family. As to quaternary structure, homodimer. Mg(2+) is required as a cofactor.

The enzyme catalyses XTP + H2O = XMP + diphosphate + H(+). The catalysed reaction is dITP + H2O = dIMP + diphosphate + H(+). It carries out the reaction ITP + H2O = IMP + diphosphate + H(+). Functionally, pyrophosphatase that catalyzes the hydrolysis of nucleoside triphosphates to their monophosphate derivatives, with a high preference for the non-canonical purine nucleotides XTP (xanthosine triphosphate), dITP (deoxyinosine triphosphate) and ITP. Seems to function as a house-cleaning enzyme that removes non-canonical purine nucleotides from the nucleotide pool, thus preventing their incorporation into DNA/RNA and avoiding chromosomal lesions. The polypeptide is dITP/XTP pyrophosphatase (Haemophilus influenzae (strain ATCC 51907 / DSM 11121 / KW20 / Rd)).